The primary structure comprises 86 residues: Insulin (86 aa).

3 disulfide bridges follow: Cys-7-Cys-72, Cys-19-Cys-85, and Cys-71-Cys-76. Positions 33 to 63 (ELEDPQVGQADPGVVPEAGRLQPLALEMTLQ) are cleaved as a propeptide — c peptide.

This sequence belongs to the insulin family. In terms of assembly, heterodimer of a B chain and an A chain linked by two disulfide bonds.

Its subcellular location is the secreted. Its function is as follows. Insulin decreases blood glucose concentration. It increases cell permeability to monosaccharides, amino acids and fatty acids. It accelerates glycolysis, the pentose phosphate cycle, and glycogen synthesis in liver. The sequence is that of Insulin (INS) from Chinchilla chinchilla (Short-tailed chinchilla).